We begin with the raw amino-acid sequence, 123 residues long: MAGVRLVFTKAFMVTVLLTLLLNIGVKPAEGQFSACNINDRPHRRGVCGSALADLVDFACSSSNQPAMVKRNAETDLDDPLRNIKLSSESALTYLTKRQGTTNIVCECCMKPCTLSELRQYCP.

A signal peptide spans 1-31 (MAGVRLVFTKAFMVTVLLTLLLNIGVKPAEG). Pyrrolidone carboxylic acid is present on Gln-32. Cystine bridges form between Cys-48/Cys-109, Cys-60/Cys-122, and Cys-108/Cys-113. Residues 68–69 (MV) constitute a propeptide that is removed on maturation. Position 99 is a pyrrolidone carboxylic acid (Gln-99).

This sequence belongs to the insulin family. Heterodimer of a B chain and an A chain linked by two disulfide bonds. Expressed in the cerebral light-green cells which are giant neuroendocrines cells involved in the control of growth.

Its subcellular location is the cytoplasmic vesicle. The protein resides in the secretory vesicle. The polypeptide is Molluscan insulin-related peptide 1 (Lymnaea stagnalis (Great pond snail)).